A 227-amino-acid polypeptide reads, in one-letter code: Cytochrome c oxidase subunit 2 (227 aa).

Residues 1–14 (MAHAAQVGLQDATS) are Mitochondrial intermembrane-facing. Residues 15-45 (PIMEELVIFHDHALMIIFLICFLVLYALFLT) traverse the membrane as a helical segment. The Mitochondrial matrix portion of the chain corresponds to 46-59 (LTTKLTNTSISDAQ). The chain crosses the membrane as a helical span at residues 60–87 (EMETIWTILPAIILILIALPSLRILYLT). Residues 88–227 (DEINDPSFTI…IFEMGPVFTL (140 aa)) are Mitochondrial intermembrane-facing. Residues histidine 161, cysteine 196, glutamate 198, cysteine 200, histidine 204, and methionine 207 each coordinate Cu cation. Residue glutamate 198 participates in Mg(2+) binding.

This sequence belongs to the cytochrome c oxidase subunit 2 family. Component of the cytochrome c oxidase (complex IV, CIV), a multisubunit enzyme composed of 14 subunits. The complex is composed of a catalytic core of 3 subunits MT-CO1, MT-CO2 and MT-CO3, encoded in the mitochondrial DNA, and 11 supernumerary subunits COX4I, COX5A, COX5B, COX6A, COX6B, COX6C, COX7A, COX7B, COX7C, COX8 and NDUFA4, which are encoded in the nuclear genome. The complex exists as a monomer or a dimer and forms supercomplexes (SCs) in the inner mitochondrial membrane with NADH-ubiquinone oxidoreductase (complex I, CI) and ubiquinol-cytochrome c oxidoreductase (cytochrome b-c1 complex, complex III, CIII), resulting in different assemblies (supercomplex SCI(1)III(2)IV(1) and megacomplex MCI(2)III(2)IV(2)). Found in a complex with TMEM177, COA6, COX18, COX20, SCO1 and SCO2. Interacts with TMEM177 in a COX20-dependent manner. Interacts with COX20. Interacts with COX16. Cu cation is required as a cofactor.

It localises to the mitochondrion inner membrane. The catalysed reaction is 4 Fe(II)-[cytochrome c] + O2 + 8 H(+)(in) = 4 Fe(III)-[cytochrome c] + 2 H2O + 4 H(+)(out). Component of the cytochrome c oxidase, the last enzyme in the mitochondrial electron transport chain which drives oxidative phosphorylation. The respiratory chain contains 3 multisubunit complexes succinate dehydrogenase (complex II, CII), ubiquinol-cytochrome c oxidoreductase (cytochrome b-c1 complex, complex III, CIII) and cytochrome c oxidase (complex IV, CIV), that cooperate to transfer electrons derived from NADH and succinate to molecular oxygen, creating an electrochemical gradient over the inner membrane that drives transmembrane transport and the ATP synthase. Cytochrome c oxidase is the component of the respiratory chain that catalyzes the reduction of oxygen to water. Electrons originating from reduced cytochrome c in the intermembrane space (IMS) are transferred via the dinuclear copper A center (CU(A)) of subunit 2 and heme A of subunit 1 to the active site in subunit 1, a binuclear center (BNC) formed by heme A3 and copper B (CU(B)). The BNC reduces molecular oxygen to 2 water molecules using 4 electrons from cytochrome c in the IMS and 4 protons from the mitochondrial matrix. The polypeptide is Cytochrome c oxidase subunit 2 (MT-CO2) (Pongo abelii (Sumatran orangutan)).